The following is a 21-amino-acid chain: Large ribosomal subunit protein uL10 (21 aa).

Belongs to the universal ribosomal protein uL10 family. Part of the ribosomal stalk of the 50S ribosomal subunit. The N-terminus interacts with L11 and the large rRNA to form the base of the stalk. The C-terminus forms an elongated spine to which L12 dimers bind in a sequential fashion forming a multimeric L10(L12)X complex.

In terms of biological role, forms part of the ribosomal stalk, playing a central role in the interaction of the ribosome with GTP-bound translation factors. The protein is Large ribosomal subunit protein uL10 (rplJ) of Bacillus cereus.